Consider the following 273-residue polypeptide: Putative inactive beta-glucuronidase protein GUSBP11 (273 aa).

A disordered region spans residues 1-20 (MTAAETGRGKPRLGGGSGLG).

This sequence belongs to the glycosyl hydrolase 2 family.

This is Putative inactive beta-glucuronidase protein GUSBP11 (GUSBP11) from Homo sapiens (Human).